The sequence spans 170 residues: Nucleoside-triphosphatase THEP1 (170 aa).

ATP is bound by residues 7–14 and 98–105; these read GMPGVGKT and IIIIDELG.

Belongs to the THEP1 NTPase family.

It carries out the reaction a ribonucleoside 5'-triphosphate + H2O = a ribonucleoside 5'-diphosphate + phosphate + H(+). In terms of biological role, has nucleotide phosphatase activity towards ATP, GTP, CTP, TTP and UTP. May hydrolyze nucleoside diphosphates with lower efficiency. In Methanocaldococcus jannaschii (strain ATCC 43067 / DSM 2661 / JAL-1 / JCM 10045 / NBRC 100440) (Methanococcus jannaschii), this protein is Nucleoside-triphosphatase THEP1.